The primary structure comprises 370 residues: tRNA (guanine(26)-N(2))-dimethyltransferase (370 aa).

In terms of domain architecture, Trm1 methyltransferase spans 4–368; that stretch reads TWVTEGRTTI…APLEEIRDCI (365 aa). Residues Arg41, Arg66, Asp82, Asp108, and Ala109 each contribute to the S-adenosyl-L-methionine site. Cys237, Cys240, Cys256, and Cys259 together coordinate Zn(2+).

The protein belongs to the class I-like SAM-binding methyltransferase superfamily. Trm1 family.

The enzyme catalyses guanosine(26) in tRNA + 2 S-adenosyl-L-methionine = N(2)-dimethylguanosine(26) in tRNA + 2 S-adenosyl-L-homocysteine + 2 H(+). Dimethylates a single guanine residue at position 26 of a number of tRNAs using S-adenosyl-L-methionine as donor of the methyl groups. The protein is tRNA (guanine(26)-N(2))-dimethyltransferase of Methanospirillum hungatei JF-1 (strain ATCC 27890 / DSM 864 / NBRC 100397 / JF-1).